Reading from the N-terminus, the 83-residue chain is Exodeoxyribonuclease 7 small subunit (83 aa).

This sequence belongs to the XseB family. Heterooligomer composed of large and small subunits.

The protein localises to the cytoplasm. It catalyses the reaction Exonucleolytic cleavage in either 5'- to 3'- or 3'- to 5'-direction to yield nucleoside 5'-phosphates.. Its function is as follows. Bidirectionally degrades single-stranded DNA into large acid-insoluble oligonucleotides, which are then degraded further into small acid-soluble oligonucleotides. The sequence is that of Exodeoxyribonuclease 7 small subunit from Rhizobium leguminosarum bv. trifolii (strain WSM2304).